We begin with the raw amino-acid sequence, 187 residues long: dCTP deaminase (187 aa).

DCTP-binding positions include 107 to 112, 131 to 133, glutamine 152, tyrosine 166, lysine 175, and glutamine 176; these read KSTYAR and TLE. Glutamate 133 functions as the Proton donor/acceptor in the catalytic mechanism.

The protein belongs to the dCTP deaminase family. In terms of assembly, homotrimer.

It catalyses the reaction dCTP + H2O + H(+) = dUTP + NH4(+). The protein operates within pyrimidine metabolism; dUMP biosynthesis; dUMP from dCTP (dUTP route): step 1/2. Its function is as follows. Catalyzes the deamination of dCTP to dUTP. The polypeptide is dCTP deaminase (Ehrlichia canis (strain Jake)).